The chain runs to 158 residues: MVEKIPMTASGYAALSDELKHRQSVDRPRIIEHIAEARSHGDLSENAEYHAAKEEQSHNEGRINELEDKLARADIIDVSKLSGDTVKFGATVTLIDEDTEKKAVWQIVGEAEADAKKGKISITSPLARALIGKKAGSSVEVVAPGGAKAYEIAKVEWR.

Residues 47–74 (AEYHAAKEEQSHNEGRINELEDKLARAD) are a coiled coil.

It belongs to the GreA/GreB family.

Necessary for efficient RNA polymerase transcription elongation past template-encoded arresting sites. The arresting sites in DNA have the property of trapping a certain fraction of elongating RNA polymerases that pass through, resulting in locked ternary complexes. Cleavage of the nascent transcript by cleavage factors such as GreA or GreB allows the resumption of elongation from the new 3'terminus. GreA releases sequences of 2 to 3 nucleotides. The sequence is that of Transcription elongation factor GreA from Rhodopseudomonas palustris (strain ATCC BAA-98 / CGA009).